The following is a 420-amino-acid chain: ATP phosphoribosyltransferase regulatory subunit (420 aa).

The protein belongs to the class-II aminoacyl-tRNA synthetase family. HisZ subfamily. As to quaternary structure, heteromultimer composed of HisG and HisZ subunits.

It localises to the cytoplasm. Its pathway is amino-acid biosynthesis; L-histidine biosynthesis; L-histidine from 5-phospho-alpha-D-ribose 1-diphosphate: step 1/9. In terms of biological role, required for the first step of histidine biosynthesis. May allow the feedback regulation of ATP phosphoribosyltransferase activity by histidine. The sequence is that of ATP phosphoribosyltransferase regulatory subunit from Bacillus anthracis (strain A0248).